Here is a 380-residue protein sequence, read N- to C-terminus: Phosphate acyltransferase (380 aa).

Positions 1–23 (MPSPPPTPETATASDRTATPAPG) are disordered.

The protein belongs to the PlsX family. In terms of assembly, homodimer. Probably interacts with PlsY.

It is found in the cytoplasm. The catalysed reaction is a fatty acyl-[ACP] + phosphate = an acyl phosphate + holo-[ACP]. Its pathway is lipid metabolism; phospholipid metabolism. Its function is as follows. Catalyzes the reversible formation of acyl-phosphate (acyl-PO(4)) from acyl-[acyl-carrier-protein] (acyl-ACP). This enzyme utilizes acyl-ACP as fatty acyl donor, but not acyl-CoA. This is Phosphate acyltransferase from Acidiphilium cryptum (strain JF-5).